The chain runs to 633 residues: Proline-rich protein LAS17 (633 aa).

The region spanning 16-127 (LPKASNKIID…KRVQKRERYA (112 aa)) is the WH1 domain. Disordered regions lie at residues 145–545 (REEQ…TTGD) and 563–606 (ALRK…PASL). A compositionally biased stretch (low complexity) spans 192 to 215 (AETFDSDQTSSFSDINSTTASAPT). 2 stretches are compositionally biased toward pro residues: residues 216-225 (TPAPALPPAS) and 238-256 (SLPP…PQHN). Low complexity-rich tracts occupy residues 257 to 269 (SPPQ…QPQS) and 307 to 322 (PQQN…RNNR). Residue threonine 334 is modified to Phosphothreonine. The residue at position 337 (serine 337) is a Phosphoserine. Over residues 342–357 (PAPPPPPRRGPAPPPP) the composition is skewed to pro residues. Composition is skewed to polar residues over residues 363-376 (TSNT…NSLL), 399-414 (NVTM…NSNR), and 454-465 (PQNTQAPSQATN). A compositionally biased stretch (low complexity) spans 479-488 (QSQIPQSAPS). The 21-residue stretch at 547 to 567 (GRDALLASIRGAGGIGALRKV) folds into the WH2 domain. Serine 588 bears the Phosphoserine mark.

As to quaternary structure, interacts with KRE6, LSB3, LSB5 and YSC84.

The sequence is that of Proline-rich protein LAS17 (LAS17) from Saccharomyces cerevisiae (strain ATCC 204508 / S288c) (Baker's yeast).